Reading from the N-terminus, the 485-residue chain is Trk system potassium uptake protein TrkG (485 aa).

Over 1 to 5 (MNTSH) the chain is Cytoplasmic. The chain crosses the membrane as a helical span at residues 6–32 (VRVVTHMCGFLVWLYSLSMLPPMVVAL). Residues 33 to 38 (FYKEKS) lie on the Periplasmic side of the membrane. The helical transmembrane segment at 39–60 (LFVFFITFVIFFCIGGGAWYTT) threads the bilayer. The Cytoplasmic portion of the chain corresponds to 61–68 (KKSGIQLR). The helical transmembrane segment at 69-93 (TRDGFIIIVMFWILFSVISAFPLWI) threads the bilayer. Residues 101 to 112 (FIDALFEGVSGI) constitute an intramembrane region (helical; Pore-forming). The stretch at 113–118 (TTTGAT) is an intramembrane region. Residues 113–118 (TTTGAT) form a selectivity filter part 1 region. The K(+) site is built by T114 and T115. The Periplasmic segment spans residues 119-127 (VIDDVSSLP). Residues 128–153 (RAYLYYRSQLNFIGGLGVIVLAVAVL) form a helical membrane-spanning segment. The Cytoplasmic portion of the chain corresponds to 154 to 180 (PLLGIGGAKLYQSEMPGPFKDDKLTPR). The chain crosses the membrane as a helical span at residues 181-205 (LADTSRTLWITYSLLGIACIVCYRL). Residues 206–208 (AGM) are Periplasmic-facing. P209 is an intramembrane region. An intramembrane region (helical; Pore-forming) is located at residues 210 to 221 (LFDAICHGISTV). Residues 222 to 227 (SLGGFS) lie within the membrane without spanning it. A selectivity filter part 2 region spans residues 222–227 (SLGGFS). 2 residues coordinate K(+): L223 and G224. Topologically, residues 228 to 237 (THSESIGYFN) are periplasmic. Residues 238–253 (NYLVELVAGSFSLLSA) constitute an intramembrane region (helical). Residues 277–297 (LRFFLLIALGVIIVTSFQVWH) traverse the membrane as a helical segment. The helical; Pore-forming intramembrane region spans 303 to 318 (LHGSFIHSFFLASSML). An intramembrane segment occupies 319-324 (TDNGLA). Residues 319 to 324 (TDNGLA) form a selectivity filter part 3 region. Residues D320 and N321 each contribute to the K(+) site. The Periplasmic segment spans residues 325-332 (TQDYASWP). Positions 333 to 344 (THTIVFLLLSSF) form an intramembrane region, helical. Positions 345–357 (FGGCIGSTCGGIK) form an intramembrane region, note=Loop between two helices. Residues 392-419 (TDRVMRSVWSFFFLYTLFTVFFILVLNG) form a helical membrane-spanning segment. Over 420 to 421 (MG) the chain is Periplasmic. The stretch at 422 to 423 (YD) is an intramembrane region. An intramembrane region (helical; Pore-forming) is located at residues 424 to 434 (FLTSFATVAAC). Residues 435–441 (INNMGLG) lie within the membrane without spanning it. The tract at residues 436-441 (NNMGLG) is selectivity filter part 4. N437 and M438 together coordinate K(+). Residues 442–453 (FGATASSFGVLN) are Periplasmic-facing. Positions 454–465 (DIAKCLMCIAMI) form an intramembrane region, helical.

It belongs to the TrkH potassium transport family.

Its subcellular location is the cell inner membrane. Low-affinity potassium transport system. Interacts with Trk system potassium uptake protein TrkA. Requires TrkE (sapD) for maximal transport activity, low activity is seen in its absence; no further stimulation is seen with SapF. Transport in the absence of SapD is dependent on a high membrane potential and a high cytoplasmic ATP concentration, suggesting this protein may be able to interact with other ATP-binding proteins. Can transport potassium and rubidium. This Escherichia coli (strain K12) protein is Trk system potassium uptake protein TrkG (trkG).